A 738-amino-acid polypeptide reads, in one-letter code: Protein ALEX (738 aa).

6 disordered regions span residues M1–M105, R155–A188, T237–P350, M387–P516, G528–P578, and G611–I689. Residues G257 to V273 are compositionally biased toward polar residues. Residues K279 to R301 show a composition bias toward basic and acidic residues. The span at M387 to Q396 shows a compositional bias: polar residues. Pro residues-rich tracts occupy residues Q410–Q438, P448–P467, and P476–S485. 3 stretches are compositionally biased toward low complexity: residues P542–G564, R615–M626, and A656–S671.

Belongs to the ALEX family. In terms of assembly, interacts with the N-terminal region of the XLas isoforms of guanine nucleotide-binding protein G(s) subunit alpha.

The protein resides in the cell membrane. It localises to the cell projection. The protein localises to the ruffle. Its function is as follows. May inhibit the adenylyl cyclase-stimulating activity of guanine nucleotide-binding protein G(s) subunit alpha which is produced from the same locus in a different open reading frame. In Rattus norvegicus (Rat), this protein is Protein ALEX.